Reading from the N-terminus, the 245-residue chain is 1-(5-phosphoribosyl)-5-[(5-phosphoribosylamino)methylideneamino] imidazole-4-carboxamide isomerase (245 aa).

The active-site Proton acceptor is Asp7. The Proton donor role is filled by Asp129.

The protein belongs to the HisA/HisF family.

Its subcellular location is the cytoplasm. It carries out the reaction 1-(5-phospho-beta-D-ribosyl)-5-[(5-phospho-beta-D-ribosylamino)methylideneamino]imidazole-4-carboxamide = 5-[(5-phospho-1-deoxy-D-ribulos-1-ylimino)methylamino]-1-(5-phospho-beta-D-ribosyl)imidazole-4-carboxamide. It functions in the pathway amino-acid biosynthesis; L-histidine biosynthesis; L-histidine from 5-phospho-alpha-D-ribose 1-diphosphate: step 4/9. In Yersinia pestis bv. Antiqua (strain Antiqua), this protein is 1-(5-phosphoribosyl)-5-[(5-phosphoribosylamino)methylideneamino] imidazole-4-carboxamide isomerase.